A 596-amino-acid chain; its full sequence is Probable protein S-acyltransferase 22 (596 aa).

2 consecutive transmembrane segments (helical) span residues 15–35 (VVAV…FAPF) and 44–64 (IAMG…IWCA). The segment at 102–125 (TGGAKSHDGTCVEDTENGSNKKLE) is disordered. In terms of domain architecture, DHHC spans 163–213 (FYCSLCEVEVFKYSKHCRVCDKCVDRFDHHCRWLNNCIGKRNYRKFFSLMV). Catalysis depends on Cys-193, which acts as the S-palmitoyl cysteine intermediate. 2 helical membrane passes run 215 to 235 (AIFL…LCLL) and 254 to 274 (LIPF…ATLP). 3 disordered regions span residues 433-455 (SGRR…RRQS), 498-523 (QTSR…DSHD), and 549-596 (MGQQ…HKSR). A compositionally biased stretch (polar residues) spans 498–518 (QTSRAMSGSGNVMVTSSPESS). Residues 549 to 571 (MGQQRGQQQQQQLSMMMMPLSRS) are compositionally biased toward low complexity.

It belongs to the DHHC palmitoyltransferase family.

Its subcellular location is the cell membrane. It is found in the cytoplasmic vesicle membrane. It carries out the reaction L-cysteinyl-[protein] + hexadecanoyl-CoA = S-hexadecanoyl-L-cysteinyl-[protein] + CoA. In terms of biological role, palmitoyl acyltransferase. This Arabidopsis thaliana (Mouse-ear cress) protein is Probable protein S-acyltransferase 22 (PAT22).